The primary structure comprises 417 residues: UDP-N-acetylmuramoylalanine--D-glutamate ligase (417 aa).

108 to 114 (GSNGKTT) contacts ATP.

This sequence belongs to the MurCDEF family.

The protein resides in the cytoplasm. The enzyme catalyses UDP-N-acetyl-alpha-D-muramoyl-L-alanine + D-glutamate + ATP = UDP-N-acetyl-alpha-D-muramoyl-L-alanyl-D-glutamate + ADP + phosphate + H(+). Its pathway is cell wall biogenesis; peptidoglycan biosynthesis. Cell wall formation. Catalyzes the addition of glutamate to the nucleotide precursor UDP-N-acetylmuramoyl-L-alanine (UMA). In Chlamydia pneumoniae (Chlamydophila pneumoniae), this protein is UDP-N-acetylmuramoylalanine--D-glutamate ligase.